The primary structure comprises 130 residues: Small ribosomal subunit protein uS11 (130 aa).

It belongs to the universal ribosomal protein uS11 family. Part of the 30S ribosomal subunit.

Located on the platform of the 30S subunit. This is Small ribosomal subunit protein uS11 from Thermoplasma acidophilum (strain ATCC 25905 / DSM 1728 / JCM 9062 / NBRC 15155 / AMRC-C165).